The primary structure comprises 132 residues: Glycine cleavage system H protein (132 aa).

The Lipoyl-binding domain occupies Leu-24–Arg-106. Position 65 is an N6-lipoyllysine (Lys-65).

The protein belongs to the GcvH family. As to quaternary structure, the glycine cleavage system is composed of four proteins: P, T, L and H. Requires (R)-lipoate as cofactor.

The glycine cleavage system catalyzes the degradation of glycine. The H protein shuttles the methylamine group of glycine from the P protein to the T protein. In Prochlorococcus marinus (strain MIT 9313), this protein is Glycine cleavage system H protein.